The sequence spans 137 residues: Cytochrome b5 (137 aa).

In terms of domain architecture, Cytochrome b5 heme-binding spans 6-82 (KKVYTLEEVA…MDEYYVGDID (77 aa)). Residues histidine 41 and histidine 65 each contribute to the heme site. The helical transmembrane segment at 108-128 (FIIKILQFLVPLAILGLAVAI) threads the bilayer.

The protein belongs to the cytochrome b5 family.

Its subcellular location is the endoplasmic reticulum membrane. It localises to the microsome membrane. Functionally, membrane bound hemoprotein which function as an electron carrier for several membrane bound oxygenases. The chain is Cytochrome b5 from Oryza sativa subsp. japonica (Rice).